A 750-amino-acid polypeptide reads, in one-letter code: Photosystem I P700 chlorophyll a apoprotein A1 (750 aa).

The next 8 helical transmembrane spans lie at valine 70 to alanine 93, leucine 156 to histidine 179, leucine 195 to leucine 219, isoleucine 291 to tyrosine 309, tryptophan 346 to tyrosine 369, leucine 385 to valine 411, alanine 433 to histidine 455, and phenylalanine 531 to leucine 549. [4Fe-4S] cluster contacts are provided by cysteine 573 and cysteine 582. The next 2 membrane-spanning stretches (helical) occupy residues histidine 589–tryptophan 610 and leucine 664–phenylalanine 686. Position 675 (histidine 675) interacts with chlorophyll a'. Chlorophyll a-binding residues include methionine 683 and tyrosine 691. Tryptophan 692 is a phylloquinone binding site. A helical transmembrane segment spans residues alanine 724–alanine 744.

Belongs to the PsaA/PsaB family. In terms of assembly, the PsaA/B heterodimer binds the P700 chlorophyll special pair and subsequent electron acceptors. PSI consists of a core antenna complex that captures photons, and an electron transfer chain that converts photonic excitation into a charge separation. The eukaryotic PSI reaction center is composed of at least 11 subunits. It depends on P700 is a chlorophyll a/chlorophyll a' dimer, A0 is one or more chlorophyll a, A1 is one or both phylloquinones and FX is a shared 4Fe-4S iron-sulfur center. as a cofactor.

It localises to the plastid. Its subcellular location is the chloroplast thylakoid membrane. The enzyme catalyses reduced [plastocyanin] + hnu + oxidized [2Fe-2S]-[ferredoxin] = oxidized [plastocyanin] + reduced [2Fe-2S]-[ferredoxin]. In terms of biological role, psaA and PsaB bind P700, the primary electron donor of photosystem I (PSI), as well as the electron acceptors A0, A1 and FX. PSI is a plastocyanin-ferredoxin oxidoreductase, converting photonic excitation into a charge separation, which transfers an electron from the donor P700 chlorophyll pair to the spectroscopically characterized acceptors A0, A1, FX, FA and FB in turn. Oxidized P700 is reduced on the lumenal side of the thylakoid membrane by plastocyanin. The polypeptide is Photosystem I P700 chlorophyll a apoprotein A1 (Aethionema grandiflorum (Persian stone-cress)).